The sequence spans 241 residues: Major prion protein (241 aa).

The N-terminal stretch at 1–15 (MLVLFVATWSDLGLC) is a signal peptide. An interaction with ADGRG6 region spans residues 16-31 (KKRPKPGGWNTGGSRY). Residues 16-223 (KKRPKPGGWN…ESQAYYQRGS (208 aa)) are interaction with GRB2, ERI3 and SYN1. The interval 18 to 101 (RPKPGGWNTG…WHKPNKPKTS (84 aa)) is disordered. A run of 5 repeats spans residues 44–52 (PQGGGGWGQ), 53–60 (PHGGGWGQ), 61–68 (PHGGGWGQ), 69–76 (PHGGGWGQ), and 77–84 (PHGGGWGQ). Residues 44 to 84 (PQGGGGWGQPHGGGWGQPHGGGWGQPHGGGWGQPHGGGWGQ) are 5 X 8 AA tandem repeats of P-H-G-G-G-W-G-Q. A compositionally biased stretch (gly residues) spans 45–88 (QGGGGWGQPHGGGWGQPHGGGWGQPHGGGWGQPHGGGWGQGGGT). The Cu(2+) site is built by histidine 54, glycine 55, glycine 56, histidine 62, glycine 63, glycine 64, histidine 70, glycine 71, glycine 72, histidine 78, glycine 79, and glycine 80. The segment covering 91–101 (QWHKPNKPKTS) has biased composition (basic residues). Cysteine 172 and cysteine 207 are disulfide-bonded. N-linked (GlcNAc...) asparagine glycans are attached at residues asparagine 174 and asparagine 190. Serine 223 is lipidated: GPI-anchor amidated serine. A propeptide spans 224 to 241 (SMVLFSSPPVILLISFLI) (removed in mature form).

Belongs to the prion family. Monomer and homodimer. Has a tendency to aggregate into amyloid fibrils containing a cross-beta spine, formed by a steric zipper of superposed beta-strands. Soluble oligomers may represent an intermediate stage on the path to fibril formation. Copper binding may promote oligomerization. Interacts with GRB2, APP, ERI3/PRNPIP and SYN1. Mislocalized cytosolically exposed PrP interacts with MGRN1; this interaction alters MGRN1 subcellular location and causes lysosomal enlargement. Interacts with APP. Interacts with KIAA1191. Interacts with ADGRG6.

Its subcellular location is the cell membrane. It localises to the golgi apparatus. Functionally, its primary physiological function is unclear. May play a role in neuronal development and synaptic plasticity. May be required for neuronal myelin sheath maintenance. May promote myelin homeostasis through acting as an agonist for ADGRG6 receptor. May play a role in iron uptake and iron homeostasis. Soluble oligomers are toxic to cultured neuroblastoma cells and induce apoptosis (in vitro). Association with GPC1 (via its heparan sulfate chains) targets PRNP to lipid rafts. Also provides Cu(2+) or Zn(2+) for the ascorbate-mediated GPC1 deaminase degradation of its heparan sulfate side chains. The protein is Major prion protein (PRNP) of Mandrillus sphinx (Mandrill).